The chain runs to 565 residues: DNA repair protein RAD7 (565 aa).

Disordered regions lie at residues 1 to 22 and 41 to 68; these read MYRS…PNSA and WYQR…FTAE. A hydrophilic region spans residues 1–200; that stretch reads MYRSRNRPKR…SKLVFNKLRD (200 aa). The span at 47–62 shows a compositional bias: basic and acidic residues; that stretch reads KKQEDATDEKKGKAED. Phosphoserine occurs at positions 64 and 85. The disordered stretch occupies residues 105 to 137; the sequence is ADSDEEEYETSHISDTPVSLSSANDRESLTKKR. Over residues 115–127 the composition is skewed to polar residues; it reads SHISDTPVSLSSA.

The protein to S.pombe SpCC613.14. As to quaternary structure, component of the global genome repair (GGR) complex composed of at least ABF1, RAD7 and RAD16. Interacts with ELC1.

Functionally, component of the global genome repair (GGR) complex which promotes global genome nucleotide excision repair (GG-NER) which removes DNA damage from nontranscribing DNA. This protein is one of 10 proteins (RAD1, 2,3,4,7,10,14, 16,23 and MMS19) involved in excision repair of DNA damaged with UV light, bulky adducts, or cross-linking agents. This Saccharomyces cerevisiae (strain ATCC 204508 / S288c) (Baker's yeast) protein is DNA repair protein RAD7 (RAD7).